Consider the following 212-residue polypeptide: 3-demethoxyubiquinol 3-hydroxylase (212 aa).

The segment covering 1–14 (MTSPSSRTPRGSTP) has biased composition (low complexity). The disordered stretch occupies residues 1–22 (MTSPSSRTPRGSTPPFEPSADE). Fe cation is bound by residues Glu-58, Glu-89, His-92, Glu-141, Glu-173, and His-176.

It belongs to the COQ7 family. It depends on Fe cation as a cofactor.

It localises to the cell membrane. It carries out the reaction a 5-methoxy-2-methyl-3-(all-trans-polyprenyl)benzene-1,4-diol + AH2 + O2 = a 3-demethylubiquinol + A + H2O. The protein operates within cofactor biosynthesis; ubiquinone biosynthesis. Catalyzes the hydroxylation of 2-nonaprenyl-3-methyl-6-methoxy-1,4-benzoquinol during ubiquinone biosynthesis. The protein is 3-demethoxyubiquinol 3-hydroxylase of Rhodospirillum rubrum (strain ATCC 11170 / ATH 1.1.1 / DSM 467 / LMG 4362 / NCIMB 8255 / S1).